We begin with the raw amino-acid sequence, 208 residues long: Thymidylate kinase (208 aa).

An ATP-binding site is contributed by 10 to 17; it reads GPEGSGKT.

This sequence belongs to the thymidylate kinase family.

The enzyme catalyses dTMP + ATP = dTDP + ADP. Its function is as follows. Phosphorylation of dTMP to form dTDP in both de novo and salvage pathways of dTTP synthesis. This is Thymidylate kinase from Bacillus anthracis.